Here is a 464-residue protein sequence, read N- to C-terminus: UPF0210 protein Cgl1545/cg1743 (464 aa).

The protein belongs to the UPF0210 family. As to quaternary structure, homodimer.

This chain is UPF0210 protein Cgl1545/cg1743, found in Corynebacterium glutamicum (strain ATCC 13032 / DSM 20300 / JCM 1318 / BCRC 11384 / CCUG 27702 / LMG 3730 / NBRC 12168 / NCIMB 10025 / NRRL B-2784 / 534).